The following is an 808-amino-acid chain: Phenylalanine--tRNA ligase beta subunit (808 aa).

A tRNA-binding domain is found at 40 to 155; sequence NQGATGVVVG…DDVEIGSDAL (116 aa). A B5 domain is found at 409–484; that stretch reads IEEPVVSLNL…RLYGYDNIPT (76 aa). Residues aspartate 462, aspartate 468, glutamate 471, and glutamate 472 each coordinate Mg(2+). An FDX-ACB domain is found at 714–807; that stretch reads PRFPAISRDI…LEASTGAVLR (94 aa).

It belongs to the phenylalanyl-tRNA synthetase beta subunit family. Type 1 subfamily. In terms of assembly, tetramer of two alpha and two beta subunits. Mg(2+) is required as a cofactor.

The protein localises to the cytoplasm. It carries out the reaction tRNA(Phe) + L-phenylalanine + ATP = L-phenylalanyl-tRNA(Phe) + AMP + diphosphate + H(+). The protein is Phenylalanine--tRNA ligase beta subunit (pheT) of Halalkalibacterium halodurans (strain ATCC BAA-125 / DSM 18197 / FERM 7344 / JCM 9153 / C-125) (Bacillus halodurans).